The chain runs to 306 residues: Aspartate carbamoyltransferase catalytic subunit (306 aa).

Positions 54 and 55 each coordinate carbamoyl phosphate. An L-aspartate-binding site is contributed by lysine 83. Residues arginine 104, histidine 132, and glutamine 135 each contribute to the carbamoyl phosphate site. 2 residues coordinate L-aspartate: arginine 165 and arginine 227. 2 residues coordinate carbamoyl phosphate: leucine 266 and proline 267.

The protein belongs to the aspartate/ornithine carbamoyltransferase superfamily. ATCase family. In terms of assembly, heterododecamer (2C3:3R2) of six catalytic PyrB chains organized as two trimers (C3), and six regulatory PyrI chains organized as three dimers (R2).

It catalyses the reaction carbamoyl phosphate + L-aspartate = N-carbamoyl-L-aspartate + phosphate + H(+). It functions in the pathway pyrimidine metabolism; UMP biosynthesis via de novo pathway; (S)-dihydroorotate from bicarbonate: step 2/3. Its function is as follows. Catalyzes the condensation of carbamoyl phosphate and aspartate to form carbamoyl aspartate and inorganic phosphate, the committed step in the de novo pyrimidine nucleotide biosynthesis pathway. This is Aspartate carbamoyltransferase catalytic subunit from Finegoldia magna (strain ATCC 29328 / DSM 20472 / WAL 2508) (Peptostreptococcus magnus).